Consider the following 597-residue polypeptide: K(+) efflux antiporter 6 (597 aa).

A signal peptide spans 1-35 (MVEGRRRRRFSLSSQQLALLLLLLSFFLCFSVASP). A run of 12 helical transmembrane segments spans residues 177-197 (LISD…AFAC), 201-221 (PVIT…LNFI), 224-244 (MVQV…ALGL), 257-277 (VAVL…GITV), 287-307 (GVFV…KFLM), 321-341 (IGIL…LPVL), 351-371 (MLSI…LSIL), 396-416 (LAAV…GLSL), 440-460 (IEPI…MLVN), 461-481 (VHFL…VIII), 499-519 (TALL…VLLS), and 543-563 (LVTT…GILL).

The protein belongs to the monovalent cation:proton antiporter 2 (CPA2) transporter (TC 2.A.37) family. KEA (TC 2.A.37.1) subfamily. As to expression, expressed in roots, stems, leaves, flowers and silique.

It localises to the golgi apparatus membrane. The protein localises to the golgi apparatus. The protein resides in the trans-Golgi network membrane. Its subcellular location is the prevacuolar compartment membrane. It is found in the endomembrane system. The catalysed reaction is K(+)(in) + H(+)(out) = K(+)(out) + H(+)(in). In terms of biological role, electroneutral K(+)/H(+) efflux antiporter involved in K(+) homeostasis and osmotic adjustment. Together with KEA4 and KEA5, promotes growth and development, and facilitates endosomal pH and ions homeostasis, as well as salt tolerance (e.g. K(+), NaCl and LiCl), probably by supporting cell wall biosynthesis during rapid etiolated seedling growth. The polypeptide is K(+) efflux antiporter 6 (Arabidopsis thaliana (Mouse-ear cress)).